The chain runs to 160 residues: Transcription elongation factor GreA (160 aa).

Residues 11 to 38 (YDRLMKELERLKSERPAIIQAIKEAREE) are a coiled coil.

This sequence belongs to the GreA/GreB family.

Its function is as follows. Necessary for efficient RNA polymerase transcription elongation past template-encoded arresting sites. The arresting sites in DNA have the property of trapping a certain fraction of elongating RNA polymerases that pass through, resulting in locked ternary complexes. Cleavage of the nascent transcript by cleavage factors such as GreA or GreB allows the resumption of elongation from the new 3'terminus. GreA releases sequences of 2 to 3 nucleotides. The sequence is that of Transcription elongation factor GreA from Nitratidesulfovibrio vulgaris (strain DSM 19637 / Miyazaki F) (Desulfovibrio vulgaris).